Consider the following 220-residue polypeptide: MSFHPALIIVDVQNDFVHPVYISSGESALEVVPVINRLLENDYKWDTVIATKDVHPKDHLSFTTSHSSTPKPSGTVVNIEAYGHVYKQTLWNSHCVENTPGCEFPDSLNGDRIEFVIPKGSDRLVESYSGFYDAIGRDNGLKAILDKKGITDVFIAGVATDICVKETALHARHWYNTYIISEAVKGSSTESHNQAIKDFRDAKIEVISEKDPILQSVRKV.

Aspartate 11 is a catalytic residue. Zn(2+)-binding residues include aspartate 53, histidine 55, and histidine 94. Residue lysine 119 is part of the active site. The active-site Nucleophile is cysteine 163.

Belongs to the isochorismatase family.

Its subcellular location is the cytoplasm. It is found in the nucleus. The protein localises to the peroxisome. It carries out the reaction nicotinamide + H2O = nicotinate + NH4(+). It participates in cofactor biosynthesis; nicotinate biosynthesis; nicotinate from nicotinamide: step 1/1. Functionally, catalyzes the deamidation of nicotinamide, an early step in the NAD(+) salvage pathway. This Schizosaccharomyces pombe (strain 972 / ATCC 24843) (Fission yeast) protein is Nicotinamidase (pnc1).